The sequence spans 308 residues: Glutaminase (308 aa).

Residues S66, N117, E161, N168, Y192, Y244, and V262 each contribute to the substrate site.

It belongs to the glutaminase family. In terms of assembly, homotetramer.

It carries out the reaction L-glutamine + H2O = L-glutamate + NH4(+). The polypeptide is Glutaminase (Cronobacter sakazakii (strain ATCC BAA-894) (Enterobacter sakazakii)).